We begin with the raw amino-acid sequence, 271 residues long: Virulence regulon transcriptional activator VirF (271 aa).

The 99-residue stretch at 167–265 folds into the HTH araC/xylS-type domain; it reads ERLQKFMEEN…GCTPSQARLT (99 aa). 2 consecutive DNA-binding regions (H-T-H motif) follow at residues 184 to 205 and 232 to 255; these read SKFAREFGMGLTTFKELFGTVY and IVDIAMEAGFSSQSYFTQSYRRRF.

Its function is as follows. Transcriptional activator of the Yersinia virulence regulon. This is Virulence regulon transcriptional activator VirF (virF) from Yersinia enterocolitica.